Here is a 347-residue protein sequence, read N- to C-terminus: Ribosomal RNA small subunit methyltransferase C (347 aa).

It belongs to the methyltransferase superfamily. RsmC family. As to quaternary structure, monomer.

It is found in the cytoplasm. It catalyses the reaction guanosine(1207) in 16S rRNA + S-adenosyl-L-methionine = N(2)-methylguanosine(1207) in 16S rRNA + S-adenosyl-L-homocysteine + H(+). In terms of biological role, specifically methylates the guanine in position 1207 of 16S rRNA in the 30S particle. This chain is Ribosomal RNA small subunit methyltransferase C, found in Shewanella baltica (strain OS185).